A 316-amino-acid chain; its full sequence is Meiotically up-regulated gene 154 protein (316 aa).

Helical transmembrane passes span 41-61 (YSIP…IYIK), 88-108 (AFLS…FIFS), 159-179 (FLLN…WFYS), and 186-206 (LLTF…SLLL). A disordered region spans residues 291-316 (HDSGISRDSSSPFKRFPHLSDGSSRF).

Its subcellular location is the endoplasmic reticulum membrane. In terms of biological role, has a role in meiosis. The sequence is that of Meiotically up-regulated gene 154 protein (mug154) from Schizosaccharomyces pombe (strain 972 / ATCC 24843) (Fission yeast).